The chain runs to 244 residues: MRGAFYVATAFLIASSTRTAAESVQIKSEITQDLDKLPVGDSDTKSLPRRSLKGSGDRLEIPVAEEERVIPTGVLEGAGKDVSEAILRLEKSGDDLNKMVKVGEGVGSSATSKGKRIQIFQKSHKDAVAEHQQVFDTYKHAIKKNEALELERDTALIKSHNWKLLSDYFSAQAAKDTKNYHNYHTIFSQLDSVVTPATASYKGIKNTREKYLALLEESFSRANAAKHAGNMDEYNEIQVTVAEL.

A signal peptide spans Met1–Ala21. Residues Leu37 to Ser46 are compositionally biased toward basic and acidic residues. The segment at Leu37–Gly56 is disordered. Residues Arg50–Arg68 carry the RxLR-dEER motif.

Belongs to the RxLR effector family.

It is found in the secreted. Its subcellular location is the host cytoplasm. The protein localises to the host nucleus. Secreted effector that suppresses pattern-triggered immunity (PTI) in plant host. In Plasmopara halstedii (Downy mildew of sunflower), this protein is Secreted RxLR effector protein RXLR-C05.